Here is an 865-residue protein sequence, read N- to C-terminus: Leucine--tRNA ligase (865 aa).

A 'HIGH' region motif is present at residues 44 to 54 (PYPSGRIHVGH). The 'KMSKS' region motif lies at 625-629 (KMSKS). Lys628 provides a ligand contact to ATP.

Belongs to the class-I aminoacyl-tRNA synthetase family.

The protein resides in the cytoplasm. The catalysed reaction is tRNA(Leu) + L-leucine + ATP = L-leucyl-tRNA(Leu) + AMP + diphosphate. The polypeptide is Leucine--tRNA ligase (Maricaulis maris (strain MCS10) (Caulobacter maris)).